A 136-amino-acid chain; its full sequence is Small ribosomal subunit protein uS11c (136 aa).

It belongs to the universal ribosomal protein uS11 family. As to quaternary structure, part of the 30S ribosomal subunit.

It localises to the plastid. This is Small ribosomal subunit protein uS11c from Epifagus virginiana (Beechdrops).